Here is a 462-residue protein sequence, read N- to C-terminus: Probable threonine/serine transporter YbxG (462 aa).

12 helical membrane-spanning segments follow: residues 17–37 (MIAL…STIS), 38–58 (WTGP…FFIM), 89–109 (ITAW…IIAV), 121–141 (PAWI…LISV), 154–174 (IKIV…FFGF), 190–210 (GGFF…VIAA), 238–258 (IIWR…TVYP), 276–296 (IGIT…AMSG), 331–351 (LYGT…NYIA), 355–375 (IFVY…FIIL), 398–418 (FAPF…VGMW), and 427–447 (LIVG…FGIG).

The protein belongs to the amino acid-polyamine-organocation (APC) superfamily.

It localises to the cell membrane. Functionally, probable threonine transporter. Is also active as a minor serine permease. The protein is Probable threonine/serine transporter YbxG (ybxG) of Bacillus subtilis (strain 168).